The primary structure comprises 274 residues: 2,3,4,5-tetrahydropyridine-2,6-dicarboxylate N-succinyltransferase (274 aa).

Arginine 104 and aspartate 141 together coordinate substrate.

This sequence belongs to the transferase hexapeptide repeat family. Homotrimer.

It localises to the cytoplasm. The catalysed reaction is (S)-2,3,4,5-tetrahydrodipicolinate + succinyl-CoA + H2O = (S)-2-succinylamino-6-oxoheptanedioate + CoA. It functions in the pathway amino-acid biosynthesis; L-lysine biosynthesis via DAP pathway; LL-2,6-diaminopimelate from (S)-tetrahydrodipicolinate (succinylase route): step 1/3. The chain is 2,3,4,5-tetrahydropyridine-2,6-dicarboxylate N-succinyltransferase from Shewanella sediminis (strain HAW-EB3).